The following is a 360-amino-acid chain: Histidinol-phosphate aminotransferase (360 aa).

Lys222 carries the N6-(pyridoxal phosphate)lysine modification.

This sequence belongs to the class-II pyridoxal-phosphate-dependent aminotransferase family. Histidinol-phosphate aminotransferase subfamily. Homodimer. Requires pyridoxal 5'-phosphate as cofactor.

It catalyses the reaction L-histidinol phosphate + 2-oxoglutarate = 3-(imidazol-4-yl)-2-oxopropyl phosphate + L-glutamate. It functions in the pathway amino-acid biosynthesis; L-histidine biosynthesis; L-histidine from 5-phospho-alpha-D-ribose 1-diphosphate: step 7/9. This chain is Histidinol-phosphate aminotransferase, found in Listeria monocytogenes serotype 4b (strain F2365).